Here is a 515-residue protein sequence, read N- to C-terminus: MGSLGSDNIAELEANGSAFNLNPLDPEEFRRQGHMVIDFLADYYQNVHKYPVRSQVEPGYLKKILPESAPNQPESLETILDDITNHIVPGITHWMSPNYFAYFPASGSTAGFLGEMLSTGFNAVCFNWMSSPAATELETIVTDWLGKLLALPEKFLFSGGGGGVLQGTTCEAILCTMTAARDKVLNKIGKDQIGKLVVYGSDQTHCALQKAAQIAGIHPANFRAVRTFKSDAFGLNPEELRKVVSADVEAGLVPLYLCPTVGTTSSTAVDQLRGLCSVAEEHEMWVHVDAAYAGSACICPEFRHFIDGVEGATSFSFNAHKWFFTNLDCCCLWVREPQALINALSTNPEYLRNKATESQKVVDYKDWQIALSRRFRAMKLWMVMRSYGVANLRNFLRSHVKMAKLFEGLVSADERFEIVVPRNFAMVCFRFNPTKKDRATGPELDRINEFNRRLLEEVNSTGRLYMTHAVIGGEYVMRFATGATLTEEKHVRCAWRAIQEHAAALMEKIYYKQRN.

2 repeat units span residues 81–138 (DDIT…TELE) and 141–192 (VTDW…GKDQ). The interval 81–192 (DDITNHIVPG…KVLNKIGKDQ (112 aa)) is 2 X approximate tandem repeats. Residue alanine 105 coordinates substrate. 2 residues coordinate pyridoxal 5'-phosphate: threonine 169 and cysteine 170. Histidine 205 lines the substrate pocket. Residues threonine 264 and asparagine 318 each coordinate pyridoxal 5'-phosphate. N6-(pyridoxal phosphate)lysine is present on lysine 321.

The protein belongs to the group II decarboxylase family. The cofactor is pyridoxal 5'-phosphate. As to expression, mostly expressed in bulbs, and, to a lower extent, in stems, roots, leaves and flowers.

It catalyses the reaction L-tyrosine + H(+) = tyramine + CO2. It participates in alkaloid biosynthesis. Its function is as follows. Catalyzes the decarboxylation of L-tyrosine to tyramine, which is converted to norbelladine, a precursor to all Amaryllidaceae alkaloids such as galanthamine, lycorine and haemanthamine, and including haemanthamine- and crinamine-type alkaloids, promising anticancer agents. The protein is Tyrosine decarboxylase 1 of Narcissus pseudonarcissus (Daffodil).